The primary structure comprises 253 residues: Triosephosphate isomerase (253 aa).

9–11 (NWK) provides a ligand contact to substrate. The active-site Electrophile is His-96. Glu-169 acts as the Proton acceptor in catalysis. Residues Gly-175, Ser-215, and 236-237 (GG) each bind substrate.

It belongs to the triosephosphate isomerase family. As to quaternary structure, homodimer.

It localises to the cytoplasm. The catalysed reaction is D-glyceraldehyde 3-phosphate = dihydroxyacetone phosphate. The protein operates within carbohydrate biosynthesis; gluconeogenesis. It functions in the pathway carbohydrate degradation; glycolysis; D-glyceraldehyde 3-phosphate from glycerone phosphate: step 1/1. Functionally, involved in the gluconeogenesis. Catalyzes stereospecifically the conversion of dihydroxyacetone phosphate (DHAP) to D-glyceraldehyde-3-phosphate (G3P). The protein is Triosephosphate isomerase of Borreliella burgdorferi (strain ZS7) (Borrelia burgdorferi).